The primary structure comprises 142 residues: Nucleoside diphosphate kinase (142 aa).

The ATP site is built by Lys-11, Phe-59, Arg-87, Thr-93, Arg-104, and Asn-114. His-117 acts as the Pros-phosphohistidine intermediate in catalysis.

This sequence belongs to the NDK family. In terms of assembly, homotetramer. Mg(2+) serves as cofactor.

It is found in the cytoplasm. It catalyses the reaction a 2'-deoxyribonucleoside 5'-diphosphate + ATP = a 2'-deoxyribonucleoside 5'-triphosphate + ADP. It carries out the reaction a ribonucleoside 5'-diphosphate + ATP = a ribonucleoside 5'-triphosphate + ADP. Its function is as follows. Major role in the synthesis of nucleoside triphosphates other than ATP. The ATP gamma phosphate is transferred to the NDP beta phosphate via a ping-pong mechanism, using a phosphorylated active-site intermediate. In Wigglesworthia glossinidia brevipalpis, this protein is Nucleoside diphosphate kinase.